We begin with the raw amino-acid sequence, 215 residues long: Adenylate kinase (215 aa).

10 to 15 (GAGKGT) lines the ATP pocket. Residues 30–59 (STGDMLRAAVKAGTELGLIAKSVMDSGGLV) form an NMP region. AMP is bound by residues threonine 31, arginine 36, 57-59 (GLV), 85-88 (GFPR), and glutamine 92. An LID region spans residues 122-159 (GRRVHEASGRVYHTVYNPPKVEGKDDVTGDDLVQRKDD). ATP-binding positions include arginine 123 and 132–133 (VY). Residues arginine 156 and arginine 167 each contribute to the AMP site. Residue glycine 201 coordinates ATP.

It belongs to the adenylate kinase family. In terms of assembly, monomer.

It is found in the cytoplasm. It carries out the reaction AMP + ATP = 2 ADP. It functions in the pathway purine metabolism; AMP biosynthesis via salvage pathway; AMP from ADP: step 1/1. Its function is as follows. Catalyzes the reversible transfer of the terminal phosphate group between ATP and AMP. Plays an important role in cellular energy homeostasis and in adenine nucleotide metabolism. The protein is Adenylate kinase of Pseudomonas fluorescens (strain SBW25).